The following is a 707-amino-acid chain: Polyribonucleotide nucleotidyltransferase (707 aa).

D488 and D494 together coordinate Mg(2+). Positions 555 to 614 (PRLYVMKINPEKIRDVIGKGGAVIRALTEETGTQINIEEDGTITIASNDSAKADEAKRRI) constitute a KH domain. Residues 624 to 692 (GKVYEGAITK…EKGRVKLSMK (69 aa)) enclose the S1 motif domain.

It belongs to the polyribonucleotide nucleotidyltransferase family. It depends on Mg(2+) as a cofactor.

It localises to the cytoplasm. It catalyses the reaction RNA(n+1) + phosphate = RNA(n) + a ribonucleoside 5'-diphosphate. In terms of biological role, involved in mRNA degradation. Catalyzes the phosphorolysis of single-stranded polyribonucleotides processively in the 3'- to 5'-direction. The protein is Polyribonucleotide nucleotidyltransferase of Polaromonas sp. (strain JS666 / ATCC BAA-500).